The chain runs to 170 residues: Adenine phosphoribosyltransferase (170 aa).

Belongs to the purine/pyrimidine phosphoribosyltransferase family. Homodimer.

The protein resides in the cytoplasm. It catalyses the reaction AMP + diphosphate = 5-phospho-alpha-D-ribose 1-diphosphate + adenine. Its pathway is purine metabolism; AMP biosynthesis via salvage pathway; AMP from adenine: step 1/1. Functionally, catalyzes a salvage reaction resulting in the formation of AMP, that is energically less costly than de novo synthesis. This chain is Adenine phosphoribosyltransferase, found in Mycoplasmopsis pulmonis (strain UAB CTIP) (Mycoplasma pulmonis).